The following is a 251-amino-acid chain: Triosephosphate isomerase (251 aa).

10-12 (NWK) contributes to the substrate binding site. Catalysis depends on H99, which acts as the Electrophile. E167 acts as the Proton acceptor in catalysis. Substrate is bound by residues G173, S211, and 232–233 (GG).

Belongs to the triosephosphate isomerase family. In terms of assembly, homodimer.

The protein resides in the cytoplasm. The enzyme catalyses D-glyceraldehyde 3-phosphate = dihydroxyacetone phosphate. It participates in carbohydrate biosynthesis; gluconeogenesis. The protein operates within carbohydrate degradation; glycolysis; D-glyceraldehyde 3-phosphate from glycerone phosphate: step 1/1. In terms of biological role, involved in the gluconeogenesis. Catalyzes stereospecifically the conversion of dihydroxyacetone phosphate (DHAP) to D-glyceraldehyde-3-phosphate (G3P). The protein is Triosephosphate isomerase of Neisseria meningitidis serogroup A / serotype 4A (strain DSM 15465 / Z2491).